The primary structure comprises 573 residues: MLO-like protein 11 (573 aa).

Residues Met-1 to Ala-19 lie on the Extracellular side of the membrane. The chain crosses the membrane as a helical span at residues Leu-20–Val-40. Residues Glu-41–Glu-69 are Cytoplasmic-facing. A helical membrane pass occupies residues Leu-70–Ile-90. The Extracellular segment spans residues Cys-91–Arg-163. A helical membrane pass occupies residues Phe-164–Ile-184. Topologically, residues Val-185 to Arg-287 are cytoplasmic. 2 helical membrane passes run Ile-288–Lys-308 and Gly-309–Ala-329. Topologically, residues Lys-330–Ser-371 are cytoplasmic. Residues Leu-372–Trp-392 traverse the membrane as a helical segment. The Extracellular portion of the chain corresponds to Gln-393–Leu-411. A helical membrane pass occupies residues Leu-412 to Val-432. Residues Thr-433 to Val-573 lie on the Cytoplasmic side of the membrane. The segment at Gln-446–Leu-467 is calmodulin-binding. 2 disordered regions span residues Glu-500–Arg-532 and Arg-554–Val-573. A compositionally biased stretch (low complexity) spans Glu-507–Gln-516. The span at Leu-561–Val-573 shows a compositional bias: polar residues.

This sequence belongs to the MLO family.

It is found in the membrane. In terms of biological role, may be involved in modulation of pathogen defense and leaf cell death. Activity seems to be regulated by Ca(2+)-dependent calmodulin binding and seems not to require heterotrimeric G proteins. The chain is MLO-like protein 11 (MLO11) from Arabidopsis thaliana (Mouse-ear cress).